We begin with the raw amino-acid sequence, 405 residues long: Protein held out wings (405 aa).

Positions 142–210 (YVPVREHPDF…HLSDDLHVLI (69 aa)) constitute a KH domain.

Homodimer. Interacts with Sxl; promoting nuclear retention of msl-2 transcripts. During embryogenesis, expression is seen in mesodermal precursors of somatic, visceral and pharyngeal muscle. Later in embryogenesis, expression is restricted to heart and muscle attachment sites of the epidermis. During onset of metamorphosis, expression is seen in muscle and muscle attachment cells.

It localises to the nucleus. In terms of biological role, RNA-binding protein involved in muscle development and dosage compensation. Vital role in steroid regulation of muscle development and to control heart rate. Required during embryogenesis, in late stages of somatic muscle development, for myotube migration and during metamorphosis for muscle reorganization. Required for integrin-mediated cell-adhesion in wing blade. Together with Sxl, acts as an inhibitor of dosage compensation in females by preventing production of msl-2 protein, an essential component of the MSL complex. Specifically binds to the 5'-UTR of msl-2 transcripts and cooperates with Sxl to promote nuclear retention of msl-2 mRNAs. The sequence is that of Protein held out wings (how) from Drosophila melanogaster (Fruit fly).